Here is a 236-residue protein sequence, read N- to C-terminus: CBS domain-containing protein CBSX1, chloroplastic (236 aa).

The N-terminal 53 residues, 1-53 (MDAVLYSVPLSFTPLRASSSPSSPYLLLPRFLSVQPCHKFTFSRSFPSKSRIP), are a transit peptide targeting the chloroplast. Residues 47 to 66 (PSKSRIPSASSAAGSTLMTN) form a disordered region. The residue at position 54 (S54) is an N-acetylserine. 2 CBS domains span residues 81–142 (MTKK…GRTE) and 175–231 (MTPA…IKRS).

It localises to the plastid. Its subcellular location is the chloroplast. The protein is CBS domain-containing protein CBSX1, chloroplastic (CBSX1) of Arabidopsis thaliana (Mouse-ear cress).